The following is a 346-amino-acid chain: Dihydroorotase (346 aa).

Zn(2+) is bound by residues His13 and His15. Residues 15–17 (HLR) and Asn41 each bind substrate. Zn(2+) contacts are provided by Lys99, His136, and His174. Position 99 is an N6-carboxylysine (Lys99). His136 lines the substrate pocket. Leu219 provides a ligand contact to substrate. Position 247 (Asp247) interacts with Zn(2+). Asp247 is a catalytic residue. Substrate contacts are provided by His251 and Ala263.

It belongs to the metallo-dependent hydrolases superfamily. DHOase family. Class II DHOase subfamily. As to quaternary structure, homodimer. It depends on Zn(2+) as a cofactor.

The enzyme catalyses (S)-dihydroorotate + H2O = N-carbamoyl-L-aspartate + H(+). The protein operates within pyrimidine metabolism; UMP biosynthesis via de novo pathway; (S)-dihydroorotate from bicarbonate: step 3/3. Functionally, catalyzes the reversible cyclization of carbamoyl aspartate to dihydroorotate. The polypeptide is Dihydroorotase (Picosynechococcus sp. (strain ATCC 27264 / PCC 7002 / PR-6) (Agmenellum quadruplicatum)).